A 452-amino-acid chain; its full sequence is LIM/homeobox protein lim-7 (452 aa).

2 LIM zinc-binding domains span residues 54-116 (AVCA…LFTT) and 117-179 (RCSR…LDNP). The tract at residues 184-268 (SVPDYSKLNN…KKKDKQATRV (85 aa)) is disordered. Low complexity-rich tracts occupy residues 192–205 (NNNN…SSSN) and 217–227 (TLTSLDNNTSS). Residues 265–324 (ATRVRTVLNENQLKILRDCYSINSRPDATLKERLVEMTGLSARVIRVWFQNKRCKDKKRQ) constitute a DNA-binding region (homeobox). The LIM interaction domain (LID) stretch occupies residues 347–376 (GIGPLMVQPATPHIDNTLGGPIDIQHFAQW).

In terms of assembly, interacts (via LID domain) with ceh-14 (via LIM zinc-binding domains 1 and 2). In terms of tissue distribution, expressed in gonadal sheath cells, URA motoneurons, and 10 additional cells near the isthmus and terminal bulb of the pharynx. Expressed in the ALA and BDU cells.

The protein resides in the nucleus. Probable DNA-binding transcriptional activator. This is LIM/homeobox protein lim-7 from Caenorhabditis elegans.